The chain runs to 1061 residues: Transmembrane protease serine 9 (1061 aa).

Over P3–A31 the chain is Cytoplasmic. Residues V32–L52 form a helical membrane-spanning segment. Over S53 to E1061 the chain is Extracellular. An LDL-receptor class A domain is found at H155–D192. 4 cysteine pairs are disulfide-bonded: C156-C168, C163-C182, C176-C191, and C230-C246. Positions I205–S438 constitute a Peptidase S1 1 domain. Residues H245 and D294 each act as charge relay system in the active site. 3 disulfides stabilise this stretch: C328–C395, C360–C374, and C385–C414. S389 serves as the catalytic Charge relay system. Positions P443–A499 are disordered. Residues P452–T461 are compositionally biased toward pro residues. Over residues S462 to V476 the composition is skewed to low complexity. The N-linked (GlcNAc...) asparagine glycan is linked to N469. Residues I506–S738 form the Peptidase S1 2 domain. Residues C531 and C547 are joined by a disulfide bond. Residue H546 is the Charge relay system of the active site. N-linked (GlcNAc...) asparagine glycosylation occurs at N549. Residue D594 is the Charge relay system of the active site. 3 disulfides stabilise this stretch: C628–C695, C660–C674, and C685–C714. 2 N-linked (GlcNAc...) asparagine glycosylation sites follow: N640 and N665. S689 functions as the Charge relay system in the catalytic mechanism. Low complexity predominate over residues D740–T752. Disordered stretches follow at residues D740–A771 and L790–T810. N791 carries N-linked (GlcNAc...) asparagine glycosylation. Low complexity predominate over residues T792–P808. Positions I830 to R1060 constitute a Peptidase S1 3 domain. 4 cysteine pairs are disulfide-bonded: C856–C872, C951–C1017, C982–C996, and C1007–C1036.

This sequence belongs to the peptidase S1 family. Post-translationally, proteolytically cleaved to generate 3 independent serine protease chains. The cleaved chains may remain attached to the membrane thanks to disulfide bonds. It is unclear whether cleavage always takes place.

It localises to the cell membrane. Its activity is regulated as follows. Inhibited by serine protease inhibitors PMSF and 4-(2-aminoethyl)benzenesulfonyl fluoride, but not by EDTA. Functionally, serase-1 and serase-2 are serine proteases that hydrolyze the peptides N-t-Boc-Gln-Ala-Arg-AMC and N-t-Boc-Gln-Gly-Arg-AMC. In contrast, N-t-Boc-Ala-Phe-Lys-AMC and N-t-Boc-Ala-Pro-Ala-AMC are not significantly hydrolyzed. This chain is Transmembrane protease serine 9 (Tmprss9), found in Rattus norvegicus (Rat).